The following is a 527-amino-acid chain: Berberine bridge enzyme-like 5 (527 aa).

The signal sequence occupies residues 1–19 (MKALFSVLCLVLLVSILRA). Cysteines 32 and 95 form a disulfide. 2 N-linked (GlcNAc...) asparagine glycosylation sites follow: Asn-35 and Asn-52. The 175-residue stretch at 73-247 (NYQKLVAIVA…LSWKINLVEV (175 aa)) folds into the FAD-binding PCMH-type domain. The 6-(S-cysteinyl)-8alpha-(pros-histidyl)-FAD (His-Cys) cross-link spans 110-172 (HDYEGLSYTS…QTLAFPAGVC (63 aa)). Asn-341 carries an N-linked (GlcNAc...) asparagine glycan.

Belongs to the oxygen-dependent FAD-linked oxidoreductase family. It depends on FAD as a cofactor. In terms of processing, the FAD cofactor is bound via a bicovalent 6-S-cysteinyl, 8alpha-N1-histidyl FAD linkage.

It is found in the secreted. The protein resides in the cell wall. In terms of biological role, probable flavin-dependent oxidoreductase. This Arabidopsis thaliana (Mouse-ear cress) protein is Berberine bridge enzyme-like 5.